The primary structure comprises 1222 residues: Serine/threonine-protein kinase WNK4 (1222 aa).

Residues 1–17 are compositionally biased toward polar residues; that stretch reads MLAPRNTETGVPMSQTE. The segment at 1–165 is disordered; it reads MLAPRNTETG…DTETQAVATS (165 aa). The span at 90–101 shows a compositional bias: low complexity; that stretch reads AGPTRSPPSSSK. Phosphoserine is present on Ser95. Basic and acidic residues predominate over residues 135 to 152; the sequence is EPPRVPDAAARERRREQE. Residues Lys154 and Lys172 each participate in a glycyl lysine isopeptide (Lys-Gly) (interchain with G-Cter in ubiquitin) cross-link. One can recognise a Protein kinase domain in the interval 171-429; it reads LKFDIEIGRG…IQDLLAHAFF (259 aa). Ser181 is an ATP binding site. Glycyl lysine isopeptide (Lys-Gly) (interchain with G-Cter in ubiquitin) cross-links involve residues Lys183, Lys223, and Lys238. ATP contacts are provided by residues 251 to 254 and Lys301; that span reads TELM. Catalysis depends on Asp318, which acts as the Proton acceptor. A Glycyl lysine isopeptide (Lys-Gly) (interchain with G-Cter in ubiquitin) cross-link involves residue Lys325. 2 positions are modified to phosphoserine; by autocatalysis: Ser328 and Ser332. Residues Lys384, Lys390, Lys447, and Lys451 each participate in a glycyl lysine isopeptide (Lys-Gly) (interchain with G-Cter in ubiquitin) cross-link. A disordered region spans residues 525-562; it reads RELEVLPPDSGPPPATVSLAPGPPSAFPPEPEEPEADQ. Residues 533-553 show a composition bias toward pro residues; sequence DSGPPPATVSLAPGPPSAFPP. An interaction with KLHL3 region spans residues 554-564; it reads EPEEPEADQHQ. Phosphoserine is present on Ser572. Disordered stretches follow at residues 626 to 659, 747 to 809, 877 to 896, and 927 to 976; these read RSGP…MRKN, DAGP…GAPF, SYPQ…SPPS, and SPGL…AQPL. Composition is skewed to low complexity over residues 627–638, 757–769, 793–807, and 877–890; these read SGPGSDFSPGDS, ALSP…ALPA, STSP…SPGA, and SYPQ…SLPV. Pro residues predominate over residues 935-944; it reads PPAPPGPLPS. Residues 953 to 963 are compositionally biased toward polar residues; that stretch reads DQESLSAQTAE. Lys990 participates in a covalent cross-link: Glycyl lysine isopeptide (Lys-Gly) (interchain with G-Cter in ubiquitin). Positions 996-999 match the RFXV motif motif; the sequence is RFQV. The segment at 1000-1087 is disordered; the sequence is TSSKEPAEPP…SSPILSHPSP (88 aa). Ser1014 is modified (phosphoserine). Over residues 1014-1032 the composition is skewed to low complexity; it reads SPTLSRSLKLPSPPLTSES. Residues 1044-1056 are compositionally biased toward basic and acidic residues; sequence ETREALAESDRAA. Glycyl lysine isopeptide (Lys-Gly) (interchain with G-Cter in ubiquitin) cross-links involve residues Lys1123, Lys1136, and Lys1137. The tract at residues 1166-1222 is disordered; the sequence is RRLSKGSFPTSRRNSLQRSDLPGPGIMRRNSLSGSSTGSQEQRASKGVTFAGDIGRM. Composition is skewed to polar residues over residues 1172 to 1183 and 1195 to 1207; these read SFPTSRRNSLQR and NSLS…SQEQ. A Phosphoserine modification is found at Ser1196.

The protein belongs to the protein kinase superfamily. Ser/Thr protein kinase family. WNK subfamily. Interacts with the C-terminal region of KCNJ1. Interacts with WNK1 and WNK3. Interacts with KLHL3. Mg(2+) serves as cofactor. Post-translationally, autophosphorylated at Ser-328 and Ser-332, promoting its activation. Phosphorylated by WNK1 and WNK3. Phosphorylated at Ser-572 in a MAP3K15/ASK3-dependent process in response to osmotic stress or hypotonic low-chloride stimulation. In terms of processing, ubiquitinated by the BCR(KLHL3) complex, leading to its degradation. Also ubiquitinated by the BCR(KLHL2) complex. Locates to the distal convoluted tubule, the medullary collecting duct and the cortical collecting duct of the kidney. Expressed in pancreatic duct.

It localises to the cell junction. Its subcellular location is the tight junction. The enzyme catalyses L-seryl-[protein] + ATP = O-phospho-L-seryl-[protein] + ADP + H(+). It carries out the reaction L-threonyl-[protein] + ATP = O-phospho-L-threonyl-[protein] + ADP + H(+). Its activity is regulated as follows. Activation requires autophosphorylation of Ser-328 and Ser-332. Autophosphorylation and subsequent activation is inhibited by increases in intracellular ionic strength: Cl(-) potently inhibits WNK4 kinase activity via direct binding. Also inhibited by K(+) ions. Functionally, serine/threonine-protein kinase component of the WNK4-SPAK/OSR1 kinase cascade, which acts as a key regulator of ion transport in the distal nephron and blood pressure. The WNK4-SPAK/OSR1 kinase cascade is composed of WNK4, which mediates phosphorylation and activation of downstream kinases OXSR1/OSR1 and STK39/SPAK. Following activation, OXSR1/OSR1 and STK39/SPAK catalyze phosphorylation of ion cotransporters, such as SLC12A1/NKCC2, SLC12A2/NKCC1, SLC12A3/NCC, SLC12A5/KCC2 or SLC12A6/KCC3, regulating their activity. Acts as a molecular switch that regulates the balance between renal salt reabsorption and K(+) secretion by modulating the activities of renal transporters and channels, including the Na-Cl cotransporter SLC12A3/NCC and the K(+) channel, KCNJ1/ROMK. Regulates NaCl reabsorption in the distal nephron by activating the thiazide-sensitive Na-Cl cotransporter SLC12A3/NCC in distal convoluted tubule cells of kidney: activates SLC12A3/NCC in a OXSR1/OSR1- and STK39/SPAK-dependent process. Also acts as a scaffold protein independently of its protein kinase activity: negatively regulates cell membrane localization of various transporters and channels (CFTR, KCNJ1/ROMK, SLC4A4, SLC26A9 and TRPV4) by clathrin-dependent endocytosis. Also inhibits the activity of the epithelial Na(+) channel (ENaC) SCNN1A, SCNN1B, SCNN1D in a inase-independent mechanism. May also phosphorylate NEDD4L. This is Serine/threonine-protein kinase WNK4 from Mus musculus (Mouse).